A 492-amino-acid polypeptide reads, in one-letter code: Asparagine--tRNA ligase, mitochondrial (492 aa).

The protein belongs to the class-II aminoacyl-tRNA synthetase family.

The protein resides in the mitochondrion matrix. It carries out the reaction tRNA(Asn) + L-asparagine + ATP = L-asparaginyl-tRNA(Asn) + AMP + diphosphate + H(+). Its function is as follows. Catalyzes the attachment of asparagine to tRNA(Asn) in the mitochondrion. In Saccharomyces cerevisiae (strain ATCC 204508 / S288c) (Baker's yeast), this protein is Asparagine--tRNA ligase, mitochondrial (SLM5).